Consider the following 295-residue polypeptide: Pyridoxal 5'-phosphate synthase subunit PdxS (295 aa).

Asp25 contacts D-ribose 5-phosphate. Lys82 acts as the Schiff-base intermediate with D-ribose 5-phosphate in catalysis. D-ribose 5-phosphate is bound at residue Gly154. Arg166 contacts D-glyceraldehyde 3-phosphate. D-ribose 5-phosphate-binding positions include Gly215 and 236–237 (GS).

Belongs to the PdxS/SNZ family. As to quaternary structure, in the presence of PdxT, forms a dodecamer of heterodimers.

The catalysed reaction is aldehydo-D-ribose 5-phosphate + D-glyceraldehyde 3-phosphate + L-glutamine = pyridoxal 5'-phosphate + L-glutamate + phosphate + 3 H2O + H(+). It participates in cofactor biosynthesis; pyridoxal 5'-phosphate biosynthesis. Catalyzes the formation of pyridoxal 5'-phosphate from ribose 5-phosphate (RBP), glyceraldehyde 3-phosphate (G3P) and ammonia. The ammonia is provided by the PdxT subunit. Can also use ribulose 5-phosphate and dihydroxyacetone phosphate as substrates, resulting from enzyme-catalyzed isomerization of RBP and G3P, respectively. The chain is Pyridoxal 5'-phosphate synthase subunit PdxS from Staphylococcus haemolyticus (strain JCSC1435).